A 156-amino-acid chain; its full sequence is Ribosomal RNA large subunit methyltransferase H (156 aa).

S-adenosyl-L-methionine contacts are provided by residues leucine 73, glycine 104, and 123-128; that span reads ISSMTL.

This sequence belongs to the RNA methyltransferase RlmH family. Homodimer.

It is found in the cytoplasm. It carries out the reaction pseudouridine(1915) in 23S rRNA + S-adenosyl-L-methionine = N(3)-methylpseudouridine(1915) in 23S rRNA + S-adenosyl-L-homocysteine + H(+). Specifically methylates the pseudouridine at position 1915 (m3Psi1915) in 23S rRNA. The polypeptide is Ribosomal RNA large subunit methyltransferase H (Burkholderia vietnamiensis (strain G4 / LMG 22486) (Burkholderia cepacia (strain R1808))).